We begin with the raw amino-acid sequence, 554 residues long: Phospho-2-dehydro-3-deoxyheptonate aldolase 1, chloroplastic (554 aa).

The N-terminal 39 residues, 1-39 (MSLATSSSMAGGAAVVPRSATATTASAFVTMKRRATAVR), are a transit peptide targeting the chloroplast. A disordered region spans residues 41–70 (VHAAEPSKNPPVGVPSAAKTSSPSVAAPEK).

It belongs to the class-II DAHP synthase family.

Its subcellular location is the plastid. The protein resides in the chloroplast. It catalyses the reaction D-erythrose 4-phosphate + phosphoenolpyruvate + H2O = 7-phospho-2-dehydro-3-deoxy-D-arabino-heptonate + phosphate. Its pathway is metabolic intermediate biosynthesis; chorismate biosynthesis; chorismate from D-erythrose 4-phosphate and phosphoenolpyruvate: step 1/7. The chain is Phospho-2-dehydro-3-deoxyheptonate aldolase 1, chloroplastic (DAHPS1) from Oryza sativa subsp. japonica (Rice).